The chain runs to 633 residues: uncharacterized protein (633 aa).

The tract at residues 1-188 (MNNRGGFSHP…GQSSFYNSSY (188 aa)) is disordered. Composition is skewed to low complexity over residues 32–80 (GQPQ…GGNN) and 104–148 (NNGN…TNSR). Positions 152-178 (RGGSSRGGSSRGGNSGSSRGGSRGGYR) are enriched in gly residues. The stretch at 580-607 (KSKNWTVDQASDELKKLSKNLRLLVSKH) forms a coiled coil. The interval 611 to 633 (TKFQPPSADHTTQFEQDDEEEEN) is disordered.

This is an uncharacterized protein from Dictyostelium discoideum (Social amoeba).